The chain runs to 99 residues: Putative septation protein SpoVG (99 aa).

This sequence belongs to the SpoVG family.

Functionally, could be involved in septation. This chain is Putative septation protein SpoVG, found in Myxococcus xanthus (strain DK1622).